A 749-amino-acid chain; its full sequence is Poly(U)-binding-splicing factor rnp-6 (749 aa).

2 consecutive RRM domains span residues 102 to 176 (SRIY…LKVN) and 207 to 285 (FRVY…KCVT). Disordered stretches follow at residues 323 to 388 (AGSS…PDVV) and 457 to 480 (IEEE…KMKR). Over residues 330 to 354 (PSESGGSRAASPAPRAQSPATPSSS) the composition is skewed to low complexity. The region spanning 658 to 739 (NVIVLRNMVT…NTVKAEAYDQ (82 aa)) is the RRM 3; atypical domain.

The protein belongs to the RRM half pint family.

It localises to the nucleus. DNA- and RNA-binding protein, involved in several nuclear processes such as pre-mRNA splicing, apoptosis and transcription regulation. Ensures the correct splicing of genes involved in immunity to promote longevity in response to infection by pathogenic bacteria such as S.aureus. This is Poly(U)-binding-splicing factor rnp-6 from Caenorhabditis elegans.